Consider the following 143-residue polypeptide: Lysozyme C (143 aa).

The N-terminal stretch at 1-15 (MKIPVFLLLLALANA) is a signal peptide. The 128-residue stretch at 16-143 (KVFQRCEWAR…LSAYIAGCGL (128 aa)) folds into the C-type lysozyme domain. Cystine bridges form between C21/C141, C45/C129, C79/C94, and C90/C108. Residues E50 and D67 contribute to the active site.

The protein belongs to the glycosyl hydrolase 22 family. As to quaternary structure, monomer.

Its subcellular location is the secreted. The catalysed reaction is Hydrolysis of (1-&gt;4)-beta-linkages between N-acetylmuramic acid and N-acetyl-D-glucosamine residues in a peptidoglycan and between N-acetyl-D-glucosamine residues in chitodextrins.. Functionally, lysozymes have primarily a bacteriolytic function; those in tissues and body fluids are associated with the monocyte-macrophage system and enhance the activity of immunoagents. This Takifugu rubripes (Japanese pufferfish) protein is Lysozyme C.